Consider the following 227-residue polypeptide: Cytidylate kinase (227 aa).

Residue 10-18 (GPASSGKST) coordinates ATP.

This sequence belongs to the cytidylate kinase family. Type 1 subfamily.

It is found in the cytoplasm. It carries out the reaction CMP + ATP = CDP + ADP. It catalyses the reaction dCMP + ATP = dCDP + ADP. This Streptococcus agalactiae serotype III (strain NEM316) protein is Cytidylate kinase.